The sequence spans 158 residues: Large ribosomal subunit protein uL13 (158 aa).

The protein belongs to the universal ribosomal protein uL13 family. In terms of assembly, part of the 50S ribosomal subunit.

This protein is one of the early assembly proteins of the 50S ribosomal subunit, although it is not seen to bind rRNA by itself. It is important during the early stages of 50S assembly. This is Large ribosomal subunit protein uL13 from Rickettsia canadensis (strain McKiel).